We begin with the raw amino-acid sequence, 122 residues long: Large ribosomal subunit protein uL14 (122 aa).

Belongs to the universal ribosomal protein uL14 family. Part of the 50S ribosomal subunit. Forms a cluster with proteins L3 and L19. In the 70S ribosome, L14 and L19 interact and together make contacts with the 16S rRNA in bridges B5 and B8.

Binds to 23S rRNA. Forms part of two intersubunit bridges in the 70S ribosome. The chain is Large ribosomal subunit protein uL14 from Methylorubrum populi (strain ATCC BAA-705 / NCIMB 13946 / BJ001) (Methylobacterium populi).